The chain runs to 436 residues: ATP-dependent RNA helicase RhlB (436 aa).

Residues 9–37 carry the Q motif motif; it reads QKFADLDLLPQVIEGLEKKGFDYCTPIQA. The Helicase ATP-binding domain maps to 40–219; sequence LPVLLTGQDI…FEHMHNPEHV (180 aa). 53 to 60 provides a ligand contact to ATP; it reads AQTGTGKT. The DEAD box signature appears at 165 to 168; sequence DEAD. The 146-residue stretch at 245 to 390 folds into the Helicase C-terminal domain; the sequence is ALLQTLIEEE…MSDYDASALL (146 aa). A disordered region spans residues 398–436; that stretch reads RLRTRNPQQRRSNNNGPRNGNRKPNQNRRPRQPRHNKEA. A compositionally biased stretch (low complexity) spans 402–421; it reads RNPQQRRSNNNGPRNGNRKP. The span at 422–436 shows a compositional bias: basic residues; the sequence is NQNRRPRQPRHNKEA.

This sequence belongs to the DEAD box helicase family. RhlB subfamily. As to quaternary structure, component of the RNA degradosome, which is a multiprotein complex involved in RNA processing and mRNA degradation.

It localises to the cytoplasm. It carries out the reaction ATP + H2O = ADP + phosphate + H(+). In terms of biological role, DEAD-box RNA helicase involved in RNA degradation. Has RNA-dependent ATPase activity and unwinds double-stranded RNA. The chain is ATP-dependent RNA helicase RhlB from Vibrio atlanticus (strain LGP32) (Vibrio splendidus (strain Mel32)).